The sequence spans 55 residues: Large ribosomal subunit protein bL33 (55 aa).

It belongs to the bacterial ribosomal protein bL33 family.

The sequence is that of Large ribosomal subunit protein bL33 from Methylobacterium nodulans (strain LMG 21967 / CNCM I-2342 / ORS 2060).